The chain runs to 413 residues: Exodeoxyribonuclease 7 large subunit (413 aa).

The protein belongs to the XseA family. As to quaternary structure, heterooligomer composed of large and small subunits.

It is found in the cytoplasm. The catalysed reaction is Exonucleolytic cleavage in either 5'- to 3'- or 3'- to 5'-direction to yield nucleoside 5'-phosphates.. Bidirectionally degrades single-stranded DNA into large acid-insoluble oligonucleotides, which are then degraded further into small acid-soluble oligonucleotides. The sequence is that of Exodeoxyribonuclease 7 large subunit from Corynebacterium efficiens (strain DSM 44549 / YS-314 / AJ 12310 / JCM 11189 / NBRC 100395).